Here is a 268-residue protein sequence, read N- to C-terminus: MRQKPIYVEIEMKSDLDTLWEYTQNPSLHKEWDLRFSNITYLNSQPCEKQKFLYETRVGFGLKVSGTGETVGVFNKCSSERSSSLAFGSDHPLSLIRHGSGYWKYIQRENGKMTFLTQYQYKTAYGLLGRWIDRLLFRPLLGWATAWSFDALRLWVEQNKHPKRFIRSAIIYVFMCLFFSLFWFYQGFAGVKTSILTGTAEIGLAILWLLPLKRKWIIHGVQACIFAGFACLGSEIFMWVLLSVFSAASGALSLQLPSARRTKRKRKK.

The next 3 helical transmembrane spans lie at 169–189 (AIIYVFMCLFFSLFWFYQGFA), 190–210 (GVKTSILTGTAEIGLAILWLL), and 225–245 (IFAGFACLGSEIFMWVLLSVF).

It localises to the cell membrane. This is an uncharacterized protein from Bacillus subtilis (strain 168).